Reading from the N-terminus, the 335-residue chain is Phosphate acyltransferase (335 aa).

The protein belongs to the PlsX family. Homodimer. Probably interacts with PlsY.

The protein resides in the cytoplasm. The catalysed reaction is a fatty acyl-[ACP] + phosphate = an acyl phosphate + holo-[ACP]. Its pathway is lipid metabolism; phospholipid metabolism. Its function is as follows. Catalyzes the reversible formation of acyl-phosphate (acyl-PO(4)) from acyl-[acyl-carrier-protein] (acyl-ACP). This enzyme utilizes acyl-ACP as fatty acyl donor, but not acyl-CoA. This chain is Phosphate acyltransferase, found in Clostridium botulinum (strain Loch Maree / Type A3).